Here is a 105-residue protein sequence, read N- to C-terminus: Circadian clock oscillator protein KaiB1 (105 aa).

This sequence belongs to the KaiB family. In terms of assembly, homotetramer in solution and crystals formed by 2 dimers. Only elutes as a homotetramer in size exclusion chromatography, interacts with KaiC1 and KaiC3. The KaiABC complex composition changes during the circadian cycle to control KaiC phosphorylation. Complexes KaiC(6), KaiA(2-4):KaiC(6), KaiB(6):KaiC(6) and KaiC(6):KaiB(6):KaiA(12) are among the most important forms, many form cooperatively. Undergoes a major conformational rearrangment; in the free state forms homotetramers as a dimer of dimers. When bound to the CI domain of KaiC switches to a monomeric thioredoxin-fold (KaiB(fs)). KaiB(fs) binds CikA, leading it to dephosphorylate phospho-RpaA.

Its function is as follows. Key component of the KaiABC oscillator complex, which constitutes the main circadian regulator in cyanobacteria. Complex composition changes during the circadian cycle to control KaiC phosphorylation. KaiA stimulates KaiC autophosphorylation, while KaiB sequesters KaiA, leading to KaiC autodephosphorylation. Phospho-Ser-431 KaiC accumulation triggers binding of KaiB to form the KaiB(6):KaiC(6) complex, leading to changes in output regulators CikA and SasA. KaiB switches to a thioredoxin-like fold (KaiB(fs)) when bound to KaiC. KaiB(6):KaiC(6) formation exposes a site for KaiA binding that sequesters KaiA from KaiC, making the KaiC(6):KaiB(6):KaiA(12) complex that results in KaiC autodephosphorylation. Component of the oscillator and circadian clock in this organism, enhances fitness in a rhythmic environment. The homotetramer reduces the ATPase activity of KaiC3 by 35%. Functionally, a metamorphic protein which reversibly switches between an inactive tetrameric fold and a rare, thioredoxin-like monomeric fold (KaiB(fs)). KaiB(fs) binds phospho-KaiC, KaiA and CikA. KaiA and CikA compete for binding to KaiB(fs), and KaiB(fs) and SasA compete for binding to KaiC, thus the clock oscillator and output signal pathway are tightly coupled. The chain is Circadian clock oscillator protein KaiB1 from Synechocystis sp. (strain ATCC 27184 / PCC 6803 / Kazusa).